A 162-amino-acid polypeptide reads, in one-letter code: ATP synthase subunit b (162 aa).

Residues 10-29 (LIWTIINFAVLLWGMHRFLY) form a helical membrane-spanning segment.

This sequence belongs to the ATPase B chain family. In terms of assembly, F-type ATPases have 2 components, F(1) - the catalytic core - and F(0) - the membrane proton channel. F(1) has five subunits: alpha(3), beta(3), gamma(1), delta(1), epsilon(1). F(0) has three main subunits: a(1), b(2) and c(10-14). The alpha and beta chains form an alternating ring which encloses part of the gamma chain. F(1) is attached to F(0) by a central stalk formed by the gamma and epsilon chains, while a peripheral stalk is formed by the delta and b chains.

The protein resides in the cell membrane. Its function is as follows. F(1)F(0) ATP synthase produces ATP from ADP in the presence of a proton or sodium gradient. F-type ATPases consist of two structural domains, F(1) containing the extramembraneous catalytic core and F(0) containing the membrane proton channel, linked together by a central stalk and a peripheral stalk. During catalysis, ATP synthesis in the catalytic domain of F(1) is coupled via a rotary mechanism of the central stalk subunits to proton translocation. Functionally, component of the F(0) channel, it forms part of the peripheral stalk, linking F(1) to F(0). The polypeptide is ATP synthase subunit b (Symbiobacterium thermophilum (strain DSM 24528 / JCM 14929 / IAM 14863 / T)).